A 293-amino-acid chain; its full sequence is Pyridoxal 5'-phosphate synthase subunit PdxS (293 aa).

D23 is a D-ribose 5-phosphate binding site. Catalysis depends on K80, which acts as the Schiff-base intermediate with D-ribose 5-phosphate. G152 provides a ligand contact to D-ribose 5-phosphate. R164 lines the D-glyceraldehyde 3-phosphate pocket. Residues G213 and G234–S235 contribute to the D-ribose 5-phosphate site.

The protein belongs to the PdxS/SNZ family. In terms of assembly, in the presence of PdxT, forms a dodecamer of heterodimers.

The enzyme catalyses aldehydo-D-ribose 5-phosphate + D-glyceraldehyde 3-phosphate + L-glutamine = pyridoxal 5'-phosphate + L-glutamate + phosphate + 3 H2O + H(+). It functions in the pathway cofactor biosynthesis; pyridoxal 5'-phosphate biosynthesis. Catalyzes the formation of pyridoxal 5'-phosphate from ribose 5-phosphate (RBP), glyceraldehyde 3-phosphate (G3P) and ammonia. The ammonia is provided by the PdxT subunit. Can also use ribulose 5-phosphate and dihydroxyacetone phosphate as substrates, resulting from enzyme-catalyzed isomerization of RBP and G3P, respectively. In Dehalococcoides mccartyi (strain ATCC BAA-2100 / JCM 16839 / KCTC 5957 / BAV1), this protein is Pyridoxal 5'-phosphate synthase subunit PdxS.